We begin with the raw amino-acid sequence, 483 residues long: GTPase Der (483 aa).

EngA-type G domains follow at residues F3–R167 and L212–N387. GTP contacts are provided by residues G9–S16, D56–L60, N119–E122, G218–S225, D265–M269, and N330–D333. The region spanning R388–D472 is the KH-like domain.

The protein belongs to the TRAFAC class TrmE-Era-EngA-EngB-Septin-like GTPase superfamily. EngA (Der) GTPase family. As to quaternary structure, associates with the 50S ribosomal subunit.

GTPase that plays an essential role in the late steps of ribosome biogenesis. This chain is GTPase Der, found in Brucella ovis (strain ATCC 25840 / 63/290 / NCTC 10512).